A 324-amino-acid chain; its full sequence is Rho crystallin (324 aa).

Thr-2 is modified (N-acetylthreonine). 218–281 (SVLGSHRDRN…SFTPARIKQN (64 aa)) contributes to the NADP(+) binding site.

This sequence belongs to the aldo/keto reductase family. Monomer.

In Aquarana catesbeiana (American bullfrog), this protein is Rho crystallin.